We begin with the raw amino-acid sequence, 373 residues long: MSQNYYQILGVSKTASQADLKKAYLKLAKQYHPDTTDAKDAEKKFKAINAAYDVLKDEQKRAAYDRLGHDAFQNQQSRGGGGNHGGFHPDINDIFGDFFSDFMGGSRRSSRPTSAKVRGSDLKYNLTINLEEAFHGIEKNINFSSAVKCDTCHGSGSEKGETVTTCDACSGVGATRMQQGFFTIEQACHKCQGNGHIIKNPCKKCHGMGRYHKQRNLSVNIPAGVENGTRIRHTGEGEAGIRGGNSGDLYVDITIKPHDIYKVDGANLHCKLPISFVNAALGGEIEVPVIEGGKVSLTIPAGTQNGDQLRLRSKGMSKMRSTIRGDMLTHIHVEVPKNLSKRQRELLEEFKKESINEKENDGSFFNKMKSLWS.

The J domain maps to 4–68 (NYYQILGVSK…QKRAAYDRLG (65 aa)). The CR-type zinc finger occupies 136-214 (GIEKNINFSS…CHGMGRYHKQ (79 aa)). Zn(2+) contacts are provided by Cys-149, Cys-152, Cys-166, Cys-169, Cys-188, Cys-191, Cys-202, and Cys-205. CXXCXGXG motif repeat units follow at residues 149-156 (CDTCHGSG), 166-173 (CDACSGVG), 188-195 (CHKCQGNG), and 202-209 (CKKCHGMG).

The protein belongs to the DnaJ family. As to quaternary structure, homodimer. Requires Zn(2+) as cofactor.

The protein localises to the cytoplasm. Participates actively in the response to hyperosmotic and heat shock by preventing the aggregation of stress-denatured proteins and by disaggregating proteins, also in an autonomous, DnaK-independent fashion. Unfolded proteins bind initially to DnaJ; upon interaction with the DnaJ-bound protein, DnaK hydrolyzes its bound ATP, resulting in the formation of a stable complex. GrpE releases ADP from DnaK; ATP binding to DnaK triggers the release of the substrate protein, thus completing the reaction cycle. Several rounds of ATP-dependent interactions between DnaJ, DnaK and GrpE are required for fully efficient folding. Also involved, together with DnaK and GrpE, in the DNA replication of plasmids through activation of initiation proteins. This chain is Chaperone protein DnaJ, found in Rickettsia rickettsii (strain Iowa).